A 490-amino-acid chain; its full sequence is Cytochrome P450 2C55 (490 aa).

C435 contacts heme.

Belongs to the cytochrome P450 family. Requires heme as cofactor. As to expression, highest level in colon. Low levels in liver and small intestine.

It is found in the endoplasmic reticulum membrane. Its subcellular location is the microsome membrane. It carries out the reaction an organic molecule + reduced [NADPH--hemoprotein reductase] + O2 = an alcohol + oxidized [NADPH--hemoprotein reductase] + H2O + H(+). Its function is as follows. Metabolizes arachidonic acid mainly to 19-hydroxyeicosatetraenoic acid (HETE). This is Cytochrome P450 2C55 from Mus musculus (Mouse).